A 642-amino-acid polypeptide reads, in one-letter code: Protein BZZ1 (642 aa).

An F-BAR domain is found at 6 to 272; sequence YKFSDELHDD…EIAKNEPVLD (267 aa). The stretch at 113 to 190 forms a coiled coil; it reads LDIAEKLKKL…QRNLKLSESD (78 aa). The segment at 397 to 447 adopts a Phorbol-ester/DAG-type zinc-finger fold; the sequence is FHDFKHVSFKLPTSCSYCREIIWGLSKRGCVCKNCGFKCHARCELLVPANC. SH3 domains lie at 515–575 and 584–642; these read ASKV…LNDE and GDSS…VTDV.

The protein belongs to the BZZ1 family.

Its subcellular location is the cell tip. The protein resides in the cytoplasm. The protein localises to the cytoskeleton. It is found in the actin patch. Functionally, plays a role in endocytosis and trafficking to the vacuole. Functions with type I myosins to restore polarity of the actin cytoskeleton after NaCl stress. The chain is Protein BZZ1 (bzz1) from Schizosaccharomyces pombe (strain 972 / ATCC 24843) (Fission yeast).